The sequence spans 409 residues: Killer cell lectin-like receptor subfamily G member 2 (409 aa).

Residues 1–120 form a disordered region; sequence MEESWEAAPG…GAEPAPSAWA (120 aa). Positions 41–53 are enriched in low complexity; that stretch reads PEGPESSPSPAGA. Residues 72-81 show a composition bias toward pro residues; it reads SPRPGSPRVP. A compositionally biased stretch (low complexity) spans 104 to 120; it reads PRNGEAPGAEPAPSAWA. Phosphoserine is present on Ser158. The tract at residues 193-216 is disordered; sequence TESGCDAEGRASPAEGSAGSPGSP. Low complexity predominate over residues 202–216; the sequence is RASPAEGSAGSPGSP. The helical transmembrane segment at 263-283 threads the bilayer; the sequence is WALAFMAVLLAVSGVVIVVLA. A C-type lectin domain is found at 300–405; sequence SEEHCYYFSA…CSTPRPWVCA (106 aa). 2 disulfide bridges follow: Cys321-Cys404 and Cys383-Cys396.

It is found in the membrane. This is Killer cell lectin-like receptor subfamily G member 2 (KLRG2) from Homo sapiens (Human).